The sequence spans 100 residues: NADH-quinone oxidoreductase subunit K (100 aa).

3 helical membrane-spanning segments follow: residues 4 to 24, 28 to 48, and 60 to 80; these read LTHG…GLVI, LLFM…AFVV, and VMYI…LALL.

This sequence belongs to the complex I subunit 4L family. In terms of assembly, NDH-1 is composed of 13 different subunits. Subunits NuoA, H, J, K, L, M, N constitute the membrane sector of the complex.

Its subcellular location is the cell inner membrane. The enzyme catalyses a quinone + NADH + 5 H(+)(in) = a quinol + NAD(+) + 4 H(+)(out). Its function is as follows. NDH-1 shuttles electrons from NADH, via FMN and iron-sulfur (Fe-S) centers, to quinones in the respiratory chain. The immediate electron acceptor for the enzyme in this species is believed to be ubiquinone. Couples the redox reaction to proton translocation (for every two electrons transferred, four hydrogen ions are translocated across the cytoplasmic membrane), and thus conserves the redox energy in a proton gradient. The chain is NADH-quinone oxidoreductase subunit K from Salmonella agona (strain SL483).